Reading from the N-terminus, the 191-residue chain is Signal peptidase IB (191 aa).

The Cytoplasmic portion of the chain corresponds to 1-7; that stretch reads MKKEILE. A helical transmembrane segment spans residues 8–28; the sequence is WIISIAVAFVILFIVGKFIVT. At 29-191 the chain is on the extracellular side; the sequence is PYTIKGESMD…HNFNPENTKN (163 aa). Residues Ser36 and Lys77 contribute to the active site.

This sequence belongs to the peptidase S26 family.

The protein resides in the cell membrane. It catalyses the reaction Cleavage of hydrophobic, N-terminal signal or leader sequences from secreted and periplasmic proteins.. Functionally, essential for cell viability. The protein is Signal peptidase IB (spsB) of Staphylococcus aureus (strain COL).